Consider the following 341-residue polypeptide: UDP-N-acetylenolpyruvoylglucosamine reductase (341 aa).

One can recognise an FAD-binding PCMH-type domain in the interval 12 to 182; sequence LSAYAKRLDI…ISVGLLLKKN (171 aa). Arg-158 is an active-site residue. Ser-228 (proton donor) is an active-site residue. The active site involves Glu-324.

This sequence belongs to the MurB family. FAD serves as cofactor.

The protein localises to the cytoplasm. The catalysed reaction is UDP-N-acetyl-alpha-D-muramate + NADP(+) = UDP-N-acetyl-3-O-(1-carboxyvinyl)-alpha-D-glucosamine + NADPH + H(+). The protein operates within cell wall biogenesis; peptidoglycan biosynthesis. Cell wall formation. This Photorhabdus laumondii subsp. laumondii (strain DSM 15139 / CIP 105565 / TT01) (Photorhabdus luminescens subsp. laumondii) protein is UDP-N-acetylenolpyruvoylglucosamine reductase.